The following is a 140-amino-acid chain: Putative peptidyl-tRNA hydrolase PTRHD1 (140 aa).

The protein belongs to the PTH2 family. PTRHD1 subfamily.

It carries out the reaction an N-acyl-L-alpha-aminoacyl-tRNA + H2O = an N-acyl-L-amino acid + a tRNA + H(+). In terms of biological role, as a putative peptidyl-tRNA hydrolase, it might be involved in releasing tRNAs from the ribosome during protein synthesis. Some evidence, however, suggests that it lacks peptidyl-tRNA hydrolase activity. The sequence is that of Putative peptidyl-tRNA hydrolase PTRHD1 (PTRHD1) from Homo sapiens (Human).